Reading from the N-terminus, the 544-residue chain is Major royal jelly protein 3 (544 aa).

Residues Met-1–Ser-20 form the signal peptide. Asn-183 carries N-linked (GlcNAc...) asparagine glycosylation. Residues Arg-421–His-544 form a disordered region. 20 tandem repeats follow at residues Asn-424 to Gly-428, Asn-429 to Asp-433, Asn-434 to Asp-438, Asn-439 to Asn-443, Asn-444 to Asp-448, Asn-449 to Asn-453, Lys-454 to Asn-458, Arg-459 to Asn-463, Arg-464 to Asn-468, Lys-469 to Asn-473, Arg-474 to Asn-478, Lys-479 to Asn-483, Arg-484 to Asn-488, Lys-489 to Asn-493, Arg-494 to Asn-498, Lys-499 to Asn-503, Lys-504 to Asn-508, Arg-509 to Asn-513, Lys-514 to Asn-518, and Arg-519 to Asn-523. Low complexity-rich tracts occupy residues Asn-424–Gln-460, Asn-468–Gln-510, and Asn-518–Asn-530. The tract at residues Asn-424–Asn-523 is 23 X 5 AA tandem repeats of [NKR]-[RQ]-N-[AGD]-[DNG]. One copy of the 21; half-length repeat lies at Gln-524–Asn-525. Repeat copies occupy residues Asn-526–Asn-530 and Asn-531–Asn-535.

This sequence belongs to the major royal jelly protein family. Homoligomer; in the absence of RNA, assembles into a higher-order oligomeric form, composed of around 20 monomer units. In terms of tissue distribution, found in and secreted from the hypopharyngeal glands of the worker honey bee (at protein level); expression peaks at 12 days post eclosion. Expressed in the brains of worker bees. Expressed in the brains of adult worker bees peaking at 12 days post eclosion (at protein level). Expressed in the spermatheca of adult queen bees (at protein level); Expression levels are higher in mated queens than in virgin queens. Expressed in queen bee ovaries and male drone testes. Expression in the head of forager worker bees is lower than in the heads of nurse worker bees.

It localises to the secreted. In terms of biological role, abundant protein component of royal jelly, a substance produced in the hypopharyngeal gland containing proteins, free amino acids, fatty acids, sugars and other nutrients, which is fed to developing larvae by worker nurse bees. Major royal jelly proteins (MRJPs) are high in essential amino acids and probably have a nutritional function in larval food. All larvae are fed some royal jelly (also known as worker jelly) early in their development but it forms the principal source of nutrition for larvae destined to become queen bees. Secreted RNA-binding protein required to concentrate, stabilize and enhance environmental RNA bioavailability in the honey bee royal jelly. Acts as a RNA-aggregating protein: binds 18 nucleotides and longer single- and double-stranded RNA (ssRNA and dsRNA, respectively) in a non-specific manner. RNA-binding drives super-order assembly of oligomers into extracellular ribonucleoprotein granules that concentrate, protect and enhance RNA uptake granules, facilitating RNA transfer among bees. Produced in the spermatheca of adult queen bees, along with other major royal jelly proteins, where it may act as a nutrient supply for sperm stored by mated queens, or be involved in energy metabolism. The sequence is that of Major royal jelly protein 3 from Apis mellifera (Honeybee).